Reading from the N-terminus, the 233-residue chain is Movement and silencing protein TGBp1 (233 aa).

The region spanning 1-133 is the (+)RNA virus helicase ATP-binding domain; the sequence is MNHFINLLVA…CKLLSSLGIK (133 aa). In terms of domain architecture, (+)RNA virus helicase C-terminal spans 134–233; sequence VESHRRDRDV…EFPHTTSRPQ (100 aa).

The protein belongs to the Tymovirales TGBp1 protein family. In terms of assembly, homodimer and homooligomer. Interacts with capsid protein. Interacts with host AGO1; this interaction targets the host protein for degradation, thereby suppressing the antiviral RNA silencing.

Its subcellular location is the host cytoplasm. Transports viral genome to neighboring plant cells directly through plasmosdesmata, without any budding. The movement protein allows efficient cell to cell propagation, by bypassing the host cell wall barrier. Increases plasmodesma size exclusion limit. Acts as a suppressor of RNA-mediated gene silencing, also known as post-transcriptional gene silencing (PTGS), a mechanism of plant viral defense that limits the accumulation of viral RNAs. In Carica papaya (Papaya), this protein is Movement and silencing protein TGBp1.